The primary structure comprises 424 residues: Deoxyguanosinetriphosphate triphosphohydrolase-like protein (424 aa).

Residues 1-10 (MEGTAPPTPY) are compositionally biased toward pro residues. Residues 1-31 (MEGTAPPTPYDPASVARYAPEPDKRPGRTAF) are disordered. Residues 20 to 31 (PEPDKRPGRTAF) show a composition bias toward basic and acidic residues. The HD domain occupies 70 to 220 (RLTHSLECAQ…MDWADDVAYS (151 aa)).

This sequence belongs to the dGTPase family. Type 2 subfamily.

The chain is Deoxyguanosinetriphosphate triphosphohydrolase-like protein from Streptomyces coelicolor (strain ATCC BAA-471 / A3(2) / M145).